The sequence spans 215 residues: Cytochrome b6 (215 aa).

The helical transmembrane segment at 32 to 52 (IFYCLGGITLTCFLVQVATGF) threads the bilayer. Cys35 contacts heme c. Heme b is bound by residues His86 and His100. The next 3 membrane-spanning stretches (helical) occupy residues 90–110 (ASMM…TGGF), 116–136 (LTWV…VTGY), and 186–206 (LHTF…FLMI). Heme b contacts are provided by His187 and His202.

The protein belongs to the cytochrome b family. PetB subfamily. As to quaternary structure, the 4 large subunits of the cytochrome b6-f complex are cytochrome b6, subunit IV (17 kDa polypeptide, PetD), cytochrome f and the Rieske protein, while the 4 small subunits are PetG, PetL, PetM and PetN. The complex functions as a dimer. Heme b is required as a cofactor. Requires heme c as cofactor.

It localises to the plastid. It is found in the chloroplast thylakoid membrane. Functionally, component of the cytochrome b6-f complex, which mediates electron transfer between photosystem II (PSII) and photosystem I (PSI), cyclic electron flow around PSI, and state transitions. The polypeptide is Cytochrome b6 (Pelargonium hortorum (Common geranium)).